We begin with the raw amino-acid sequence, 282 residues long: Urease accessory protein UreD (282 aa).

This sequence belongs to the UreD family. UreD, UreF and UreG form a complex that acts as a GTP-hydrolysis-dependent molecular chaperone, activating the urease apoprotein by helping to assemble the nickel containing metallocenter of UreC. The UreE protein probably delivers the nickel.

The protein localises to the cytoplasm. Its function is as follows. Required for maturation of urease via the functional incorporation of the urease nickel metallocenter. The polypeptide is Urease accessory protein UreD (Methylobacterium sp. (strain 4-46)).